Consider the following 387-residue polypeptide: EARP and GARP complex-interacting protein 1 (387 aa).

Residue methionine 1 is modified to N-acetylmethionine. 4 WD repeats span residues 132 to 172 (TAHS…SQAV), 180 to 222 (GGKG…QIYC), 226 to 266 (AHGQ…EPVK), and 270 to 310 (EHSH…SEPF). The disordered stretch occupies residues 310–334 (FGHLVDDDDISDQEDHRSEEKSKEP). Serine 320 carries the phosphoserine modification. Residues 322–334 (QEDHRSEEKSKEP) show a composition bias toward basic and acidic residues. A WD 5 repeat occupies 345 to 385 (EHEDSVYAVDWSSADPWLFASLSYDGRLVINRVPRALKYHI).

The protein belongs to the WD repeat EIPR1 family. In terms of assembly, interacts with two multisubunit tethering complexes: EARP composed of VPS50, VPS51, VPS52 and VPS53 subunits and GARP complex composed of VPS51, VPS52, VPS53 and VPS54 subunits. Interacts with SNAP29.

It is found in the golgi apparatus. The protein localises to the trans-Golgi network. In terms of biological role, acts as a component of endosomal retrieval machinery that is involved in protein transport from early endosomes to either recycling endosomes or the trans-Golgi network. Mediates the recruitment of Golgi-associated retrograde protein (GARP) complex to the trans-Golgi network and controls early endosome-to-Golgi transport of internalized protein. Promotes the recycling of internalized transferrin receptor (TFRC) to the plasma membrane through interaction with endosome-associated recycling protein (EARP) complex. Controls proper insulin distribution and secretion, and retention of cargo in mature dense core vesicles. Required for the stability of the endosome-associated retrograde protein (EARP) complex subunits and for proper localization and association of EARP with membranes. The polypeptide is EARP and GARP complex-interacting protein 1 (Macaca fascicularis (Crab-eating macaque)).